We begin with the raw amino-acid sequence, 396 residues long: Cystathionine beta-lyase (396 aa).

K211 bears the N6-(pyridoxal phosphate)lysine mark.

This sequence belongs to the trans-sulfuration enzymes family. As to quaternary structure, homotetramer. Requires pyridoxal 5'-phosphate as cofactor.

The protein localises to the cytoplasm. It carries out the reaction L,L-cystathionine + H2O = L-homocysteine + pyruvate + NH4(+). It catalyses the reaction an S-substituted L-cysteine + H2O = a thiol + pyruvate + NH4(+). It participates in amino-acid biosynthesis; L-methionine biosynthesis via de novo pathway; L-homocysteine from L-cystathionine: step 1/1. Catalyzes the cleavage of cystathionine to homocysteine, pyruvate and ammonia during methionine biosynthesis. This Haemophilus influenzae (strain ATCC 51907 / DSM 11121 / KW20 / Rd) protein is Cystathionine beta-lyase (metC).